The chain runs to 971 residues: GEM-interacting protein (971 aa).

Ser19 is modified (phosphoserine). 3 disordered regions span residues 41-79 (AGDP…PEGP), 231-267 (LRAR…AQAK), and 383-476 (DTKK…IENG). The span at 44 to 56 (PVRREDLEPDKAD) shows a compositional bias: basic and acidic residues. The span at 59 to 69 (TVVTEENSEAS) shows a compositional bias: polar residues. Phosphoserine occurs at positions 75, 235, 238, 247, 436, and 440. The F-BAR domain maps to 85 to 348 (EELDLRLIRT…CCVPFEPGQR (264 aa)). A compositionally biased stretch (acidic residues) spans 458–471 (SSDDFEERDPDLGD). The Phorbol-ester/DAG-type zinc-finger motif lies at 492–536 (THRLRRLRGPAKCRECEAFMVSGTECEECFLTCHKRCLETLLILC). Positions 553–756 (LQLPRDFPEE…FLIVHYEQIF (204 aa)) constitute a Rho-GAP domain. Thr659 carries the phosphothreonine modification. Positions 799–865 (IALDSSPDPK…LGAQSRGHFS (67 aa)) are disordered. Over residues 805–817 (PDPKHHSALEKCP) the composition is skewed to basic and acidic residues. Ser884, Ser908, and Ser924 each carry phosphoserine.

As to quaternary structure, interacts with GEM through its N-terminal.

Stimulates, in vitro and in vivo, the GTPase activity of RhoA. This Mus musculus (Mouse) protein is GEM-interacting protein (Gmip).